Reading from the N-terminus, the 784-residue chain is LPS-assembly protein LptD (784 aa).

The first 24 residues, 1–24 (MKKRIPTLLATMIATALYSQQGLA), serve as a signal peptide directing secretion. Disulfide bonds link Cys31-Cys724 and Cys173-Cys725.

This sequence belongs to the LptD family. As to quaternary structure, component of the lipopolysaccharide transport and assembly complex. Interacts with LptE and LptA. In terms of processing, contains two intramolecular disulfide bonds.

It is found in the cell outer membrane. Its function is as follows. Together with LptE, is involved in the assembly of lipopolysaccharide (LPS) at the surface of the outer membrane. This chain is LPS-assembly protein LptD, found in Shigella sonnei (strain Ss046).